Reading from the N-terminus, the 331-residue chain is ADP,ATP carrier protein 2, mitochondrial (331 aa).

Solcar repeat units lie at residues 29–122 (KNFA…FKRM), 134–226 (KWFG…LKPV), and 238–320 (ASFA…LQIL). Helical transmembrane passes span 31–58 (FAIDFLMGGVSAAVSKTAAAPIERVKLL), 99–123 (TANVIRYFPTQALNFAFKDYFKRMF), 132–152 (YWKWFGGNLASGGAAGASSLF), 202–223 (FNISCVGIIVYRGLYFGLYDSL), and 237–257 (FASFALGWLITNGAGLASYPI). Residues arginine 104 and lysine 116 each coordinate ADP. Arginine 261 provides a ligand contact to ADP. The segment at 261–266 (RRRMMM) is important for transport activity. A Nucleotide carrier signature motif motif is present at residues 261–266 (RRRMMM). Residues 297 to 317 (AGANILRAIAGAGVLSGYDQL) traverse the membrane as a helical segment.

The protein belongs to the mitochondrial carrier (TC 2.A.29) family. As to quaternary structure, monomer.

It is found in the mitochondrion inner membrane. It carries out the reaction ADP(in) + ATP(out) = ADP(out) + ATP(in). The matrix-open state (m-state) is inhibited by the membrane-permeable bongkrekic acid (BKA). The cytoplasmic-open state (c-state) is inhibited by the membrane-impermeable toxic inhibitor carboxyatractyloside (CATR). Its function is as follows. ADP:ATP antiporter that mediates import of ADP into the mitochondrial matrix for ATP synthesis, and export of ATP out to fuel the cell. Cycles between the cytoplasmic-open state (c-state) and the matrix-open state (m-state): operates by the alternating access mechanism with a single substrate-binding site intermittently exposed to either the cytosolic (c-state) or matrix (m-state) side of the inner mitochondrial membrane. This is ADP,ATP carrier protein 2, mitochondrial (ANT-G2) from Triticum aestivum (Wheat).